Reading from the N-terminus, the 526-residue chain is Cytochrome P450 monooxygenase BOT4 (526 aa).

N-linked (GlcNAc...) asparagine glycosylation is present at Asn-5. Residues 41–61 traverse the membrane as a helical segment; that stretch reads CLVAIILCRFIAVWSYNLWFH. 2 N-linked (GlcNAc...) asparagine glycosylation sites follow: Asn-205 and Asn-281. Residue Cys-464 coordinates heme.

Belongs to the cytochrome P450 family. It depends on heme as a cofactor.

It localises to the membrane. The protein operates within secondary metabolite biosynthesis. In terms of biological role, cytochrome P450 monooxygenase; part of the gene cluster that mediates the biosynthesis of botrydial. Botrydial is necessary for colonization of plant tissue by the T4 strain. It is a strain-dependent virulence factor since highly aggressive strains like SAS56 or B05 still retain substantial virulence when botrydial synthesis is impaired, since they produce also botcinic acid. The first step of botrydial biosynthesis is performed by the sesquiterpene synthase BOT2 which catalyzes the cyclization of farnesyl diphosphate (FPP) to presilphiperfolan-8-beta-ol (PSP). The cytochrome P450 monooxygenase BOT4 then catalyzes the hydroxylation at C-4 to give a probotryane intermediate. Acetylation of the hydroxyl at C-4 is carried out by the acetyltransferase BOT5, followed by the combined action of the P450 monooxygenases BOT3 and BOT1, to yield finally the glycol, via the regio- and stereospecific hydroxylations at C-10 and C-15 of the probotryane intermediates, respectively. The cleavage of the C10-C15 bond of probotryane skeleton is an intriguing and chemically important reaction, which could be mediated by some of the monooxygenases or by a combination of them. It is possible that either BOT3 or BOT1 would oxidize either the 10- or the 15-hydroxy group to the hydroperoxide derivative, which would then undergo heterolytic fragmentation to give the dialdehyde botrydial. Finally, the dehydrogenase BOT7 might be involved in the conversion of botrydial to dihydrobotrydial. In Botryotinia fuckeliana (Noble rot fungus), this protein is Cytochrome P450 monooxygenase BOT4.